The following is a 225-amino-acid chain: NAD(P)H-quinone oxidoreductase subunit K, chloroplastic (225 aa).

[4Fe-4S] cluster contacts are provided by C43, C44, C108, and C139.

The protein belongs to the complex I 20 kDa subunit family. NDH is composed of at least 16 different subunits, 5 of which are encoded in the nucleus. The cofactor is [4Fe-4S] cluster.

The protein localises to the plastid. It localises to the chloroplast thylakoid membrane. It catalyses the reaction a plastoquinone + NADH + (n+1) H(+)(in) = a plastoquinol + NAD(+) + n H(+)(out). The catalysed reaction is a plastoquinone + NADPH + (n+1) H(+)(in) = a plastoquinol + NADP(+) + n H(+)(out). Its function is as follows. NDH shuttles electrons from NAD(P)H:plastoquinone, via FMN and iron-sulfur (Fe-S) centers, to quinones in the photosynthetic chain and possibly in a chloroplast respiratory chain. The immediate electron acceptor for the enzyme in this species is believed to be plastoquinone. Couples the redox reaction to proton translocation, and thus conserves the redox energy in a proton gradient. In Barbarea verna (Land cress), this protein is NAD(P)H-quinone oxidoreductase subunit K, chloroplastic.